A 365-amino-acid polypeptide reads, in one-letter code: Chorismate synthase (365 aa).

An NADP(+)-binding site is contributed by R46. FMN is bound by residues 124-126 (RAS), G284, 299-303 (KPTPS), and R326.

It belongs to the chorismate synthase family. The cofactor is FMNH2.

It catalyses the reaction 5-O-(1-carboxyvinyl)-3-phosphoshikimate = chorismate + phosphate. The protein operates within metabolic intermediate biosynthesis; chorismate biosynthesis; chorismate from D-erythrose 4-phosphate and phosphoenolpyruvate: step 7/7. Catalyzes the anti-1,4-elimination of the C-3 phosphate and the C-6 proR hydrogen from 5-enolpyruvylshikimate-3-phosphate (EPSP) to yield chorismate, which is the branch point compound that serves as the starting substrate for the three terminal pathways of aromatic amino acid biosynthesis. This reaction introduces a second double bond into the aromatic ring system. In Pyrobaculum neutrophilum (strain DSM 2338 / JCM 9278 / NBRC 100436 / V24Sta) (Thermoproteus neutrophilus), this protein is Chorismate synthase.